Consider the following 363-residue polypeptide: MLYDLIQHHGSAHVTVLNLFRYITFRAGAACLTALAISLLLGNPLIAQLRRIQREGQPIRALGPERHILEKAGTPTMGGVLILAALFGSTLLWADLTDGYVWAVLLTTLSFGAVGFADDYLKLSRRNTAGVSKRMRLGCEFAASLVGGYWMQSLMPADLANHLAFPFLKEWLLPLGFAFPLFAMITITGFGNAVNFTDGLDGLAIVPVIIAALVFGLISYLVGNHVFADYLQLHAVPGTGELCVFCSALVGAGLGFLWFNAPPAAVFMGDTGSLSLGGALGAIAVAVKHELVLCIVGGLFVVETLSVIIQVFWFRRTGRRVFLMAPLHHHFEKKGWQEPKIVIRFWIVSIVLGLCGLATLKLR.

11 consecutive transmembrane segments (helical) span residues 27–47 (AGAACLTALAISLLLGNPLIA), 76–96 (TMGGVLILAALFGSTLLWADL), 97–117 (TDGYVWAVLLTTLSFGAVGFA), 137–157 (LGCEFAASLVGGYWMQSLMPA), 171–191 (WLLPLGFAFPLFAMITITGFG), 202–222 (GLAIVPVIIAALVFGLISYLV), 226–246 (VFADYLQLHAVPGTGELCVFC), 248–268 (ALVGAGLGFLWFNAPPAAVFM), 271–291 (TGSLSLGGALGAIAVAVKHEL), 292–312 (VLCIVGGLFVVETLSVIIQVF), and 340–360 (KIVIRFWIVSIVLGLCGLATL).

It belongs to the glycosyltransferase 4 family. MraY subfamily. The cofactor is Mg(2+).

Its subcellular location is the cell inner membrane. It carries out the reaction UDP-N-acetyl-alpha-D-muramoyl-L-alanyl-gamma-D-glutamyl-meso-2,6-diaminopimeloyl-D-alanyl-D-alanine + di-trans,octa-cis-undecaprenyl phosphate = di-trans,octa-cis-undecaprenyl diphospho-N-acetyl-alpha-D-muramoyl-L-alanyl-D-glutamyl-meso-2,6-diaminopimeloyl-D-alanyl-D-alanine + UMP. Its pathway is cell wall biogenesis; peptidoglycan biosynthesis. Functionally, catalyzes the initial step of the lipid cycle reactions in the biosynthesis of the cell wall peptidoglycan: transfers peptidoglycan precursor phospho-MurNAc-pentapeptide from UDP-MurNAc-pentapeptide onto the lipid carrier undecaprenyl phosphate, yielding undecaprenyl-pyrophosphoryl-MurNAc-pentapeptide, known as lipid I. The chain is Phospho-N-acetylmuramoyl-pentapeptide-transferase from Gluconacetobacter diazotrophicus (strain ATCC 49037 / DSM 5601 / CCUG 37298 / CIP 103539 / LMG 7603 / PAl5).